Consider the following 579-residue polypeptide: Lens epithelium-derived growth factor (579 aa).

Residues 1 to 64 (MSRDFKPGDL…PKDIFPYSEN (64 aa)) enclose the PWWP domain. 4 disordered regions span residues 62-81 (SENK…NEGL), 88-203 (PKVK…EEAA), 215-397 (AAPV…SMDS), and 492-579 (AEQK…FENK). Residues 94–107 (HQPSHPAVNTSIKE) are compositionally biased toward polar residues. A compositionally biased stretch (basic and acidic residues) spans 153–173 (KEMHSTKEDEEPSEKNSKEGV). The span at 184 to 193 (VARRGRKRKA) shows a compositional bias: basic residues. The Nuclear localization signal signature appears at 186–196 (RRGRKRKAEKQ). A compositionally biased stretch (low complexity) spans 215 to 224 (AAPVTVSPKV). Residues 261-308 (EEEKAKKKGPDEKPKKQGKKDEEGQKEEEKPKKEYDKKDGKKEAEPKR) are compositionally biased toward basic and acidic residues. Residues 321-330 (DSEDEGGEEE) show a composition bias toward acidic residues. A compositionally biased stretch (basic residues) spans 334 to 349 (KKKGGRSFQSTHRRNI). Positions 347 to 442 (RNIMRGQHEK…SMQQAQKHTE (96 aa)) form a coiled coil. Basic and acidic residues-rich tracts occupy residues 352 to 397 (GQHE…SMDS) and 492 to 522 (AEQK…KDQT). The tract at residues 387–464 (MEKKRETSMD…VSQVIMEKST (78 aa)) is integrase-binding domain (IBD). Over residues 530-543 (GSETQDTNQSQHNG) the composition is skewed to polar residues. Residues 544 to 579 (ENAEEKDKLEVASKKKTCGEESELEKPAKESAFENK) show a composition bias toward basic and acidic residues.

The protein belongs to the HDGF family.

The protein localises to the nucleus. In terms of biological role, transcriptional coactivator involved in neuroepithelial stem cell differentiation and neurogenesis. Involved in particular in lens epithelial cell gene regulation and stress responses. May play an important role in lens epithelial to fiber cell terminal differentiation. May play a protective role during stress-induced apoptosis. This chain is Lens epithelium-derived growth factor (PSIP1), found in Gallus gallus (Chicken).